The primary structure comprises 322 residues: Phosphate acetyltransferase (322 aa).

Belongs to the phosphate acetyltransferase and butyryltransferase family.

Its subcellular location is the cytoplasm. The enzyme catalyses acetyl-CoA + phosphate = acetyl phosphate + CoA. It functions in the pathway metabolic intermediate biosynthesis; acetyl-CoA biosynthesis; acetyl-CoA from acetate: step 2/2. This chain is Phosphate acetyltransferase (pta), found in Mycoplasma capricolum subsp. capricolum (strain California kid / ATCC 27343 / NCTC 10154).